We begin with the raw amino-acid sequence, 137 residues long: Large-conductance mechanosensitive channel (137 aa).

Helical transmembrane passes span 10-30 and 76-96; these read FAMR…AAFG and GVFI…FMAI.

Belongs to the MscL family. In terms of assembly, homopentamer.

The protein localises to the cell inner membrane. Channel that opens in response to stretch forces in the membrane lipid bilayer. May participate in the regulation of osmotic pressure changes within the cell. This is Large-conductance mechanosensitive channel from Enterobacter sp. (strain 638).